The chain runs to 338 residues: MLDRLVLALLAVLSVPYALAVRLRALAYGAGIFRVKQLNRPVISVGNLTVGGTGKTPMVALVARLLMARGKRVAVISRGYGGSLEGKTHIVSDGQRVFLSAAEAGDEPVHLATAVPGLMAVIGTDRYAAGLLAQERLNPDVFILDDGFQHLRLHRDLNILLMDCSAPLGNGMVLPAGLLREPPLALKRADLVVYTRCTGAEAPAVHGAIPSCRAGHVLAGVELLPGGERQPFTALYGRRGVAFAGIADPDAFFASLREEGVDLAATVSFGDHCPYGEEEVARLMAARRTAGADFLITTGKDAVKLGPVLSRLGIVYAAVLEMSLMDPKPLETAIDKVL.

49 to 56 is an ATP binding site; it reads TVGGTGKT.

This sequence belongs to the LpxK family.

It catalyses the reaction a lipid A disaccharide + ATP = a lipid IVA + ADP + H(+). Its pathway is glycolipid biosynthesis; lipid IV(A) biosynthesis; lipid IV(A) from (3R)-3-hydroxytetradecanoyl-[acyl-carrier-protein] and UDP-N-acetyl-alpha-D-glucosamine: step 6/6. Its function is as follows. Transfers the gamma-phosphate of ATP to the 4'-position of a tetraacyldisaccharide 1-phosphate intermediate (termed DS-1-P) to form tetraacyldisaccharide 1,4'-bis-phosphate (lipid IVA). The chain is Tetraacyldisaccharide 4'-kinase from Geobacter metallireducens (strain ATCC 53774 / DSM 7210 / GS-15).